The primary structure comprises 265 residues: Mlc titration factor A (265 aa).

Zn(2+)-binding residues include His111, His148, His152, and Glu211.

The protein belongs to the MtfA family. In terms of assembly, interacts with Mlc. Zn(2+) serves as cofactor.

The protein resides in the cytoplasm. Functionally, involved in the modulation of the activity of the glucose-phosphotransferase system (glucose-PTS). Interacts with the transcriptional repressor Mlc, preventing its interaction with DNA and leading to the modulation of expression of genes regulated by Mlc, including ptsG, which encodes the PTS system glucose-specific EIICB component. In terms of biological role, shows zinc-dependent metallopeptidase activity. The protein is Mlc titration factor A of Escherichia fergusonii.